The sequence spans 73 residues: Putative membrane protein insertion efficiency factor (73 aa).

It belongs to the UPF0161 family.

The protein localises to the cell inner membrane. Functionally, could be involved in insertion of integral membrane proteins into the membrane. This Neisseria gonorrhoeae (strain ATCC 700825 / FA 1090) protein is Putative membrane protein insertion efficiency factor.